The primary structure comprises 76 residues: cAMP-dependent protein kinase inhibitor alpha (76 aa).

The residue at position 2 (T2) is an N-acetylthreonine. A disordered region spans residues 49–76 (KTEGEEDAQRSSTEQSGEAQGEAAKSES).

This sequence belongs to the PKI family.

Functionally, extremely potent competitive inhibitor of cAMP-dependent protein kinase activity, this protein interacts with the catalytic subunit of the enzyme after the cAMP-induced dissociation of its regulatory chains. The polypeptide is cAMP-dependent protein kinase inhibitor alpha (PKIA) (Homo sapiens (Human)).